Reading from the N-terminus, the 610-residue chain is DNA mismatch repair protein MutL (610 aa).

The segment at 351–406 (GQRPQAPWSAETSPSRPYQPAPAFSERPQASFDGLSTPTARAEPQFSPDPVSPGLA) is disordered.

This sequence belongs to the DNA mismatch repair MutL/HexB family.

In terms of biological role, this protein is involved in the repair of mismatches in DNA. It is required for dam-dependent methyl-directed DNA mismatch repair. May act as a 'molecular matchmaker', a protein that promotes the formation of a stable complex between two or more DNA-binding proteins in an ATP-dependent manner without itself being part of a final effector complex. This Rhizobium etli (strain ATCC 51251 / DSM 11541 / JCM 21823 / NBRC 15573 / CFN 42) protein is DNA mismatch repair protein MutL.